Here is a 308-residue protein sequence, read N- to C-terminus: Homoserine kinase (308 aa).

ATP is bound at residue 95 to 105 (PQSRGLGSSAA).

It belongs to the GHMP kinase family. Homoserine kinase subfamily.

Its subcellular location is the cytoplasm. It catalyses the reaction L-homoserine + ATP = O-phospho-L-homoserine + ADP + H(+). Its pathway is amino-acid biosynthesis; L-threonine biosynthesis; L-threonine from L-aspartate: step 4/5. In terms of biological role, catalyzes the ATP-dependent phosphorylation of L-homoserine to L-homoserine phosphate. The protein is Homoserine kinase of Corynebacterium jeikeium (strain K411).